The primary structure comprises 307 residues: Heme A synthase (307 aa).

The Cytoplasmic portion of the chain corresponds to 1 to 6 (MKFALR). A helical membrane pass occupies residues 7 to 27 (LLSVITTFVMLIVLIGGALVT). Residues 28–65 (KTGSGLGCGRQWPLCHGRFFPEMNPASIIEWSHRMSTG) lie on the Extracellular side of the membrane. Cys35 and Cys42 are oxidised to a cystine. Glu57 is an active-site residue. His60 serves as a coordination point for heme o. Residues 66–86 (VSTILVLALAVLCWKKISPVF) traverse the membrane as a helical segment. Topologically, residues 87-92 (RETKFL) are cytoplasmic. The helical transmembrane segment at 93–113 (VIMSIIFLLLQALLGALAVVF) threads the bilayer. Topologically, residues 114–121 (GSNALVMA) are extracellular. Residues 122–142 (LHFGISLISFASVLLLALLVF) form a helical membrane-spanning segment. His123 contacts heme o. The Cytoplasmic segment spans residues 143-161 (EATRSETKLVKPLHIGKKM). A helical transmembrane segment spans residues 162-182 (QFHIYGLITYTYIVVYTGAYV). Topologically, residues 183 to 216 (RHTKSSLACSVFPFCSKDGALPAYFNQWVQMSHR) are extracellular. Residues Cys191 and Cys197 are joined by a disulfide bond. His215 lines the heme b pocket. The helical transmembrane segment at 217 to 237 (AAALLLFVWIFVAMFHAMKHY) threads the bilayer. Residues 238–242 (KEQKQ) lie on the Cytoplasmic side of the membrane. A helical membrane pass occupies residues 243–263 (LYYGWIISAILITLQAISGVM). Residues 264–274 (SVYSQLALGYA) are Extracellular-facing. The chain crosses the membrane as a helical span at residues 275 to 295 (LAHSFFISCLFGVLCYFCLLI). His277 contributes to the heme b binding site. Residues 296 to 307 (ARFKYESKEPFK) lie on the Cytoplasmic side of the membrane.

It belongs to the COX15/CtaA family. Type 1 subfamily. As to quaternary structure, interacts with CtaB. Requires heme b as cofactor.

The protein localises to the cell membrane. It catalyses the reaction Fe(II)-heme o + 2 A + H2O = Fe(II)-heme a + 2 AH2. Its pathway is porphyrin-containing compound metabolism; heme A biosynthesis; heme A from heme O: step 1/1. Catalyzes the conversion of heme O to heme A by two successive hydroxylations of the methyl group at C8. The first hydroxylation forms heme I, the second hydroxylation results in an unstable dihydroxymethyl group, which spontaneously dehydrates, resulting in the formyl group of heme A. The protein is Heme A synthase of Bacillus pumilus (strain SAFR-032).